The sequence spans 440 residues: UDP-N-acetylglucosamine 1-carboxyvinyltransferase (440 aa).

22 to 23 is a phosphoenolpyruvate binding site; it reads KN. Arg102 serves as a coordination point for UDP-N-acetyl-alpha-D-glucosamine. The active-site Proton donor is the Cys126. Residue Cys126 is modified to 2-(S-cysteinyl)pyruvic acid O-phosphothioketal. UDP-N-acetyl-alpha-D-glucosamine is bound by residues 131-135, Asp320, and Ile342; that span reads RPVDQ.

It belongs to the EPSP synthase family. MurA subfamily.

The protein resides in the cytoplasm. The catalysed reaction is phosphoenolpyruvate + UDP-N-acetyl-alpha-D-glucosamine = UDP-N-acetyl-3-O-(1-carboxyvinyl)-alpha-D-glucosamine + phosphate. Its pathway is cell wall biogenesis; peptidoglycan biosynthesis. Its function is as follows. Cell wall formation. Adds enolpyruvyl to UDP-N-acetylglucosamine. The protein is UDP-N-acetylglucosamine 1-carboxyvinyltransferase of Acidovorax ebreus (strain TPSY) (Diaphorobacter sp. (strain TPSY)).